A 130-amino-acid polypeptide reads, in one-letter code: MSATQNYGTGRRKTATARVFLRPGTGNISINNRSLDNFFGRETARMVVRQPLELTETVEKFDIYVTVIGGGVSGQAGAIRHGITRALMQYDETLRGALRKAGFVTRDAREVERKKVGLRKARKRPQYSKR.

Belongs to the universal ribosomal protein uS9 family.

The polypeptide is Small ribosomal subunit protein uS9 (Pseudomonas syringae pv. tomato (strain ATCC BAA-871 / DC3000)).